Here is a 373-residue protein sequence, read N- to C-terminus: 3 beta-hydroxysteroid dehydrogenase/Delta 5--&gt;4-isomerase type 1 (373 aa).

NADP(+) is bound by residues glycine 10–leucine 15, tyrosine 155, and lysine 159. Lysine 159 acts as the Proton donor in catalysis. A helical membrane pass occupies residues leucine 288–isoleucine 308.

This sequence belongs to the 3-beta-HSD family. Placenta and skin. Predominantly expressed in mammary gland tissue.

The protein resides in the endoplasmic reticulum membrane. It is found in the mitochondrion membrane. It carries out the reaction a 3beta-hydroxy-Delta(5)-steroid + NAD(+) = a 3-oxo-Delta(5)-steroid + NADH + H(+). The enzyme catalyses pregnenolone + NAD(+) = pregn-5-ene-3,20-dione + NADH + H(+). The catalysed reaction is 3beta-hydroxyandrost-5-en-17-one + NAD(+) = androst-5-ene-3,17-dione + NADH + H(+). It catalyses the reaction androst-5-en-3beta,17beta-diol + NAD(+) = 17beta-hydroxy-androst-5-en-3-one + NADH + H(+). It carries out the reaction a 3beta-hydroxysteroid + NADP(+) = a 3-oxosteroid + NADPH + H(+). The enzyme catalyses 5alpha-androstane-3beta,17beta-diol + NADP(+) = 17beta-hydroxy-5alpha-androstan-3-one + NADPH + H(+). The catalysed reaction is 3beta-hydroxy-5alpha-androstan-17-one + NADP(+) = 5alpha-androstan-3,17-dione + NADPH + H(+). It catalyses the reaction a 3-oxo-Delta(5)-steroid = a 3-oxo-Delta(4)-steroid. It carries out the reaction pregn-5-ene-3,20-dione = progesterone. The enzyme catalyses androst-5-ene-3,17-dione = androst-4-ene-3,17-dione. The catalysed reaction is 17beta-hydroxy-androst-5-en-3-one = testosterone. It catalyses the reaction 5alpha-androstane-3beta,17beta-diol + NAD(+) = 17beta-hydroxy-5alpha-androstan-3-one + NADH + H(+). It functions in the pathway steroid hormone biosynthesis. It participates in steroid metabolism. Its function is as follows. A bifunctional enzyme responsible for the oxidation and isomerization of 3beta-hydroxy-Delta(5)-steroid precursors to 3-oxo-Delta(4)-steroids, an essential step in steroid hormone biosynthesis. Specifically catalyzes the conversion of pregnenolone to progesterone, 17alpha-hydroxypregnenolone to 17alpha-hydroxyprogesterone, dehydroepiandrosterone (DHEA) to 4-androstenedione, and androstenediol to testosterone. Additionally, catalyzes the interconversion between 3beta-hydroxy and 3-oxo-5alpha-androstane steroids controlling the bioavalability of the active forms. Specifically converts dihydrotestosterone to its inactive form 5alpha-androstanediol, that does not bind androgen receptor/AR. Also converts androstanedione, a precursor of testosterone and estrone, to epiandrosterone. Expected to use NAD(+) as preferred electron donor for the 3beta-hydroxy-steroid dehydrogenase activity and NADPH for the 3-ketosteroid reductase activity. This chain is 3 beta-hydroxysteroid dehydrogenase/Delta 5--&gt;4-isomerase type 1, found in Homo sapiens (Human).